The following is a 715-amino-acid chain: DNA-directed RNA polymerase subunit beta' (715 aa).

The Zn(2+) site is built by Cys-69, Cys-71, Cys-87, and Cys-90. A disordered region spans residues 244–272 (APESQSEVIEAQGPVPQAEEEKQRDQSIQ). Positions 520, 522, and 524 each coordinate Mg(2+).

It belongs to the RNA polymerase beta' chain family. RpoC1 subfamily. In plastids the minimal PEP RNA polymerase catalytic core is composed of four subunits: alpha, beta, beta', and beta''. When a (nuclear-encoded) sigma factor is associated with the core the holoenzyme is formed, which can initiate transcription. It depends on Mg(2+) as a cofactor. Zn(2+) is required as a cofactor.

It is found in the plastid. Its subcellular location is the chloroplast. The enzyme catalyses RNA(n) + a ribonucleoside 5'-triphosphate = RNA(n+1) + diphosphate. Its function is as follows. DNA-dependent RNA polymerase catalyzes the transcription of DNA into RNA using the four ribonucleoside triphosphates as substrates. The polypeptide is DNA-directed RNA polymerase subunit beta' (Zygnema circumcarinatum (Green alga)).